Reading from the N-terminus, the 257-residue chain is Meiotically up-regulated gene 14 protein (257 aa).

The protein resides in the cytoplasm. It localises to the nucleus. In terms of biological role, has a role in meiosis. This chain is Meiotically up-regulated gene 14 protein (mug14), found in Schizosaccharomyces pombe (strain 972 / ATCC 24843) (Fission yeast).